The chain runs to 473 residues: Photosystem II CP43 reaction center protein (473 aa).

The propeptide occupies 1-14 (MKTLYSLRRFYPVE). The residue at position 15 (T15) is an N-acetylthreonine. T15 is modified (phosphothreonine). 5 consecutive transmembrane segments (helical) span residues 69–93 (LFEVAHFVPEKPMYEQGLILLPHLA), 134–155 (LIGPETLEESLPFFGYVWKDRS), 178–200 (KALYFGGVYDTWAPGGGDVRKIT), 255–275 (KPFAWARRAFVWSGEAYLSYS), and 291–312 (WFNNTAYPSEFYGPTGPEASQA). Residue E367 coordinates [CaMn4O5] cluster. Residues 447–471 (RARAAAAGFEKGIDRDFEPVLSMNP) form a helical membrane-spanning segment.

It belongs to the PsbB/PsbC family. PsbC subfamily. As to quaternary structure, PSII is composed of 1 copy each of membrane proteins PsbA, PsbB, PsbC, PsbD, PsbE, PsbF, PsbH, PsbI, PsbJ, PsbK, PsbL, PsbM, PsbT, PsbX, PsbY, PsbZ, Psb30/Ycf12, at least 3 peripheral proteins of the oxygen-evolving complex and a large number of cofactors. It forms dimeric complexes. Binds multiple chlorophylls and provides some of the ligands for the Ca-4Mn-5O cluster of the oxygen-evolving complex. It may also provide a ligand for a Cl- that is required for oxygen evolution. PSII binds additional chlorophylls, carotenoids and specific lipids. serves as cofactor.

The protein localises to the plastid. It localises to the chloroplast thylakoid membrane. Functionally, one of the components of the core complex of photosystem II (PSII). It binds chlorophyll and helps catalyze the primary light-induced photochemical processes of PSII. PSII is a light-driven water:plastoquinone oxidoreductase, using light energy to abstract electrons from H(2)O, generating O(2) and a proton gradient subsequently used for ATP formation. In Cycas taitungensis (Prince sago), this protein is Photosystem II CP43 reaction center protein.